Consider the following 172-residue polypeptide: MALDLKKYVASIPDYPEPGIIFRDISPLMADGEAYREATDQIVQFARDKHVDMIVGPEARGFIVGCPVAYELGVGFAPARKKGKLPRETVKATYDLEYGQSALYLHKDAIKPGQNVLVTDDLLATGGTISATIQMVEELGGNVVGTAFLVELKELHGRDKIKDYDMLSLMQF.

It belongs to the purine/pyrimidine phosphoribosyltransferase family. Homodimer.

The protein localises to the cytoplasm. It carries out the reaction AMP + diphosphate = 5-phospho-alpha-D-ribose 1-diphosphate + adenine. Its pathway is purine metabolism; AMP biosynthesis via salvage pathway; AMP from adenine: step 1/1. Functionally, catalyzes a salvage reaction resulting in the formation of AMP, that is energically less costly than de novo synthesis. The sequence is that of Adenine phosphoribosyltransferase from Lactiplantibacillus plantarum (strain ATCC BAA-793 / NCIMB 8826 / WCFS1) (Lactobacillus plantarum).